A 336-amino-acid chain; its full sequence is Cytochrome P450 monooxygenase lcsN (336 aa).

Cysteine 271 contributes to the heme binding site.

It belongs to the cytochrome P450 family. Requires heme as cofactor.

It participates in secondary metabolite biosynthesis. Functionally, cytochrome P450 monooxygenase; part of the gene cluster that mediates the biosynthesis of the lipopeptide antibiotics leucinostatins that show extensive biological activities, including antimalarial, antiviral, antibacterial, antifungal, and antitumor activities, as well as phytotoxic. Leucinostatin A contains nine amino acid residues, including the unusual amino acid 4-methyl-L-proline (MePro), 2-amino-6-hydroxy-4-methyl-8-oxodecanoic acid (AHyMeOA), 3-hydroxyleucine (HyLeu), alpha-aminoisobutyric acid (AIB), beta-Ala, a 4-methylhex-2-enoic acid at the N-terminus as well as a N1,N1-dimethylpropane-1,2-diamine (DPD) at the C-terminus. The biosynthesis of leucinostatins is probably initiated with the assembly of 4-methylhex-2-enoic acid by a reducing PKS. Two reducing polyketide synthases, lcsB and lcsC, have been identified in the cluster and it is not clear which is the one that assembles 4-methylhex-2-enoic acid since both contain KS, AT, DH, cMT, ER, KR and ACP domains. The polyketide residue might be transferred to the NRPS lcsA, mediated by two additional enzymes, the acyl-CoA ligase lcsD and the thioesterase lcsE. The linear polyketide carboxylic acid, which is released from PKS, is converted to a CoA thioester by lcsD, and then lcsE hydrolyzes the thiol bond and shuttles the polyketide intermediate to lcsA. The C domain of the first module catalyzed the condensation of 4-methylhex-2-enoic acid and MePro carried by domain A1, followed by successive condensations of nine amino acids to trigger the elongation of the linear peptide. A5 and A6 domains of lcsA are proposed to incorporate leucine, A2 AHyMeOA, and A3 incorporates HyLeu. A4, A7 and A8 incorporate AIB. The AHyMeOA in leucinostatin A activated by the A2 might be produced by the second PKS (lcsB or lcsC) present within the cluster. The MePro is probably produced via leucine cyclization and may originate from a separate pathway, independent of the cluster. Another nonproteinogenic amino acid, beta-Ala, could be produced by an aspartic acid decarboxylase also localized outside of the cluster. Two candidates are VFPBJ_01400 and VFPBJ_10476. The final peptide scaffold may be released by the NAD(P)H-dependent thioester reductase (TE) at the C-terminal region of lcsA. Transamination of the lcsA product by the transaminase lcsP may produce DPD at the C-terminus. Further hydroxylation steps performed alternatively by the cytochrome P450 monooxygenases lcsI, lcsK and lcsN then yield the non-methylated leucinostatins precursor. It is also possible that leucines can be hydroxylated prior to their incorporation into the peptide. Varying extents of methylation then lead to the formation of leucinostatins A and B. The chain is Cytochrome P450 monooxygenase lcsN from Purpureocillium lilacinum (Paecilomyces lilacinus).